Here is a 94-residue protein sequence, read N- to C-terminus: MFTINVEVRKDQGKGASRRLRIANKFPAIVYGGEEAPVSIELDHDSVKNMESKPEFYSEAVTLVIDGKETKVKVQAVQRHPFKPKLAHIDFRRV.

This sequence belongs to the bacterial ribosomal protein bL25 family. In terms of assembly, part of the 50S ribosomal subunit; part of the 5S rRNA/L5/L18/L25 subcomplex. Contacts the 5S rRNA. Binds to the 5S rRNA independently of L5 and L18.

Functionally, this is one of the proteins that binds to the 5S RNA in the ribosome where it forms part of the central protuberance. The polypeptide is Large ribosomal subunit protein bL25 (Serratia proteamaculans (strain 568)).